The sequence spans 1083 residues: Protein HOS4 (1083 aa).

Disordered stretches follow at residues methionine 1–valine 233 and serine 267–serine 328. Serine 14 and serine 16 each carry phosphoserine. Over residues threonine 24–proline 62 the composition is skewed to basic and acidic residues. Threonine 37 bears the Phosphothreonine mark. Serine 67 bears the Phosphoserine mark. The segment covering serine 67–alanine 85 has biased composition (polar residues). Residues lysine 86 to glutamate 118 show a composition bias toward basic and acidic residues. Over residues proline 135–serine 149 the composition is skewed to polar residues. Basic and acidic residues predominate over residues aspartate 151–aspartate 166. Positions aspartate 167–glutamate 185 are enriched in acidic residues. Over residues valine 186–aspartate 207 the composition is skewed to basic and acidic residues. A compositionally biased stretch (polar residues) spans valine 277–glutamine 293. Serine 290 carries the post-translational modification Phosphoserine. Positions valine 300 to serine 310 are enriched in low complexity. Positions valine 314 to glycine 323 are enriched in basic residues. ANK repeat units lie at residues glycine 329–aspartate 359, alanine 363–isoleucine 392, and phenylalanine 398–isoleucine 427. The disordered stretch occupies residues alanine 472–glutamate 516. The segment covering asparagine 481 to threonine 496 has biased composition (polar residues). At serine 507 the chain carries Phosphoserine. ANK repeat units follow at residues alanine 532–leucine 561 and asparagine 593–lysine 622. Disordered regions lie at residues histidine 661–glutamate 742 and aspartate 762–isoleucine 790. Over residues asparagine 665–asparagine 675 the composition is skewed to acidic residues. Serine 698 is modified (phosphoserine). Threonine 700 is modified (phosphothreonine). Over residues asparagine 721 to aspartate 740 the composition is skewed to basic and acidic residues. The residue at position 778 (serine 778) is a Phosphoserine.

As to quaternary structure, identified in the Set3C complex with HOS2, HST1, SNT1, SIF2, CPR1 and SET3.

Unknown. Component of the Set3C complex, which is required to repress early/middle sporulation genes during meiosis. This Saccharomyces cerevisiae (strain ATCC 204508 / S288c) (Baker's yeast) protein is Protein HOS4 (HOS4).